A 230-amino-acid polypeptide reads, in one-letter code: uncharacterized protein (230 aa).

In terms of domain architecture, S4 RNA-binding spans 2-69 (HRLAKIISNA…KPRLWIYYKP (68 aa)). Asp102 functions as the Nucleophile in the catalytic mechanism.

It belongs to the pseudouridine synthase RsuA family.

The enzyme catalyses a uridine in RNA = a pseudouridine in RNA. This is an uncharacterized protein from Rickettsia conorii (strain ATCC VR-613 / Malish 7).